The chain runs to 122 residues: MIQMQSLLKVADNTGARTVMCIKVLGGSKRRFAGIGDVIKVAVKDAAPRGRIKRGEVYNAVIVRTAKGIRRADGSLVKFDTNAAVILNNKLEPIGTRIFGPVTRELRTAKFMKIVSLAPEVI.

It belongs to the universal ribosomal protein uL14 family. As to quaternary structure, part of the 50S ribosomal subunit. Forms a cluster with proteins L3 and L19. In the 70S ribosome, L14 and L19 interact and together make contacts with the 16S rRNA in bridges B5 and B8.

Binds to 23S rRNA. Forms part of two intersubunit bridges in the 70S ribosome. This chain is Large ribosomal subunit protein uL14, found in Nitrosomonas europaea (strain ATCC 19718 / CIP 103999 / KCTC 2705 / NBRC 14298).